The sequence spans 146 residues: Nitric oxide reductase subunit C (146 aa).

The chain crosses the membrane as a helical; Signal-anchor span at residues 13–29; that stretch reads IYFGGSVFFFLVFLGLT. Residues Cys61, Cys64, and His65 each contribute to the heme c site.

As to quaternary structure, heterodimer of cytochromes b (large subunit) and c (small subunit).

It is found in the cell membrane. In terms of biological role, component of the anaerobic respiratory chain that transforms nitrate to dinitrogen (denitrification). This chain is Nitric oxide reductase subunit C (norC), found in Stutzerimonas stutzeri (Pseudomonas stutzeri).